Here is a 230-residue protein sequence, read N- to C-terminus: Sugar fermentation stimulation protein homolog (230 aa).

The protein belongs to the SfsA family.

The polypeptide is Sugar fermentation stimulation protein homolog (Clostridium botulinum (strain ATCC 19397 / Type A)).